The following is a 75-amino-acid chain: UPF0346 protein LJ_1103 (75 aa).

It belongs to the UPF0346 family.

In Lactobacillus johnsonii (strain CNCM I-12250 / La1 / NCC 533), this protein is UPF0346 protein LJ_1103.